A 309-amino-acid chain; its full sequence is Methionyl-tRNA formyltransferase (309 aa).

Residue 109-112 (SLLP) coordinates (6S)-5,6,7,8-tetrahydrofolate.

The protein belongs to the Fmt family.

It catalyses the reaction L-methionyl-tRNA(fMet) + (6R)-10-formyltetrahydrofolate = N-formyl-L-methionyl-tRNA(fMet) + (6S)-5,6,7,8-tetrahydrofolate + H(+). Its function is as follows. Attaches a formyl group to the free amino group of methionyl-tRNA(fMet). The formyl group appears to play a dual role in the initiator identity of N-formylmethionyl-tRNA by promoting its recognition by IF2 and preventing the misappropriation of this tRNA by the elongation apparatus. This Chloroflexus aggregans (strain MD-66 / DSM 9485) protein is Methionyl-tRNA formyltransferase.